Reading from the N-terminus, the 400-residue chain is Large envelope protein (400 aa).

At methionine 1 the chain carries N-acetylmethionine. Residue glycine 2 is the site of N-myristoyl glycine; by host attachment. The pre-S1 stretch occupies residues 2–119; that stretch reads GAPLSTARRG…PPLRDTHPQA (118 aa). The pre-S stretch occupies residues 2 to 174; sequence GAPLSTARRG…FSKTGDPAMN (173 aa). Residues 2 to 181 lie on the Virion surface; in external conformation side of the membrane; that stretch reads GAPLSTARRG…AMNMENITSG (180 aa). At 2 to 253 the chain is on the intravirion; in internal conformation side; sequence GAPLSTARRG…PGYRWMCLRR (252 aa). An N-linked (GlcNAc...) asparagine glycan is attached at proline 4. Residues 70–115 form a disordered region; the sequence is PHGGLLGWSPQAQGILTTSPPDPPPASTNRRSGRKPTPVSPPLRDT. A compositionally biased stretch (polar residues) spans 79–88; that stretch reads PQAQGILTTS. The interval 120 to 174 is pre-S2; it reads MQWNSTQFHQALLDPRVRGLYFPAGGSSSETQNPVPTIASLTSSIFSKTGDPAMN. Residues 182–202 traverse the membrane as a helical segment; it reads LLGPLLVLQAVCFLLTKILTI. Residues 203–253 are Intravirion; in external conformation-facing; the sequence is PQSLDSWWTSLNFLGVPPGCPGQNSQSPISNHLPTSCPPTCPGYRWMCLRR. Residues 254-274 traverse the membrane as a helical segment; sequence FIIFLFILLLCLIFLLVLLDY. Over 275–348 the chain is Virion surface; sequence QGMLPVCPLL…WASARFSWLS (74 aa). N-linked (GlcNAc...) asparagine; by host glycosylation is present at asparagine 320. The helical transmembrane segment at 349–369 threads the bilayer; sequence LLVQFVQWCVGLSPTVWLLVI. Residues 370–375 lie on the Intravirion side of the membrane; that stretch reads WMIWYW. A helical transmembrane segment spans residues 376–398; the sequence is GPNLCSILSPFIPLLPIFCYLWA. Topologically, residues 399 to 400 are virion surface; that stretch reads SI.

Belongs to the orthohepadnavirus major surface antigen family. In terms of assembly, in its internal form (Li-HBsAg), interacts with the capsid protein and with the isoform S. Interacts with host chaperone CANX. Associates with host chaperone CANX through its pre-S2 N glycan; this association may be essential for isoform M proper secretion. As to quaternary structure, interacts with isoform L. Interacts with the antigens of satellite virus HDV (HDVAgs); this interaction is required for encapsidation of HDV genomic RNA. In terms of processing, isoform M is N-terminally acetylated by host at a ratio of 90%, and N-glycosylated by host at the pre-S2 region. Post-translationally, myristoylated.

The protein localises to the virion membrane. In terms of biological role, the large envelope protein exists in two topological conformations, one which is termed 'external' or Le-HBsAg and the other 'internal' or Li-HBsAg. In its external conformation the protein attaches the virus to cell receptors and thereby initiating infection. This interaction determines the species specificity and liver tropism. This attachment induces virion internalization predominantly through caveolin-mediated endocytosis. The large envelope protein also assures fusion between virion membrane and endosomal membrane. In its internal conformation the protein plays a role in virion morphogenesis and mediates the contact with the nucleocapsid like a matrix protein. Functionally, the middle envelope protein plays an important role in the budding of the virion. It is involved in the induction of budding in a nucleocapsid independent way. In this process the majority of envelope proteins bud to form subviral lipoprotein particles of 22 nm of diameter that do not contain a nucleocapsid. In Homo sapiens (Human), this protein is Large envelope protein.